The sequence spans 205 residues: Methylthioribulose-1-phosphate dehydratase (205 aa).

Zn(2+) is bound by residues histidine 95 and histidine 97.

This sequence belongs to the aldolase class II family. MtnB subfamily. Requires Zn(2+) as cofactor.

The catalysed reaction is 5-(methylsulfanyl)-D-ribulose 1-phosphate = 5-methylsulfanyl-2,3-dioxopentyl phosphate + H2O. It functions in the pathway amino-acid biosynthesis; L-methionine biosynthesis via salvage pathway; L-methionine from S-methyl-5-thio-alpha-D-ribose 1-phosphate: step 2/6. Its function is as follows. Catalyzes the dehydration of methylthioribulose-1-phosphate (MTRu-1-P) into 2,3-diketo-5-methylthiopentyl-1-phosphate (DK-MTP-1-P). The sequence is that of Methylthioribulose-1-phosphate dehydratase from Microcystis aeruginosa (strain NIES-843 / IAM M-2473).